The primary structure comprises 233 residues: Biosynthetic peptidoglycan transglycosylase (233 aa).

A helical transmembrane segment spans residues 17–37 (IVLAVLALVVLPYVLIFFYLL).

Belongs to the glycosyltransferase 51 family.

The protein localises to the cell inner membrane. The catalysed reaction is [GlcNAc-(1-&gt;4)-Mur2Ac(oyl-L-Ala-gamma-D-Glu-L-Lys-D-Ala-D-Ala)](n)-di-trans,octa-cis-undecaprenyl diphosphate + beta-D-GlcNAc-(1-&gt;4)-Mur2Ac(oyl-L-Ala-gamma-D-Glu-L-Lys-D-Ala-D-Ala)-di-trans,octa-cis-undecaprenyl diphosphate = [GlcNAc-(1-&gt;4)-Mur2Ac(oyl-L-Ala-gamma-D-Glu-L-Lys-D-Ala-D-Ala)](n+1)-di-trans,octa-cis-undecaprenyl diphosphate + di-trans,octa-cis-undecaprenyl diphosphate + H(+). It participates in cell wall biogenesis; peptidoglycan biosynthesis. Peptidoglycan polymerase that catalyzes glycan chain elongation from lipid-linked precursors. The chain is Biosynthetic peptidoglycan transglycosylase from Rhizobium etli (strain ATCC 51251 / DSM 11541 / JCM 21823 / NBRC 15573 / CFN 42).